The primary structure comprises 162 residues: Protein A49 (162 aa).

It belongs to the poxviridae A49 protein family.

This chain is Protein A49, found in Homo sapiens (Human).